The primary structure comprises 416 residues: 4-hydroxy-3-methylbut-2-en-1-yl diphosphate synthase (flavodoxin) (416 aa).

[4Fe-4S] cluster contacts are provided by C304, C307, C350, and E357.

This sequence belongs to the IspG family. Requires [4Fe-4S] cluster as cofactor.

It catalyses the reaction (2E)-4-hydroxy-3-methylbut-2-enyl diphosphate + oxidized [flavodoxin] + H2O + 2 H(+) = 2-C-methyl-D-erythritol 2,4-cyclic diphosphate + reduced [flavodoxin]. It participates in isoprenoid biosynthesis; isopentenyl diphosphate biosynthesis via DXP pathway; isopentenyl diphosphate from 1-deoxy-D-xylulose 5-phosphate: step 5/6. Functionally, converts 2C-methyl-D-erythritol 2,4-cyclodiphosphate (ME-2,4cPP) into 1-hydroxy-2-methyl-2-(E)-butenyl 4-diphosphate. The protein is 4-hydroxy-3-methylbut-2-en-1-yl diphosphate synthase (flavodoxin) of Rhizobium etli (strain CIAT 652).